The primary structure comprises 190 residues: Acyl-acyl carrier protein thioesterase ATL3, chloroplastic (190 aa).

A chloroplast-targeting transit peptide spans 1 to 49; the sequence is MFLQVTGTATPAMPAVVFLNSWRRPLSIPLRSVKTFKPLAFFDLKGGKG. D66 is a catalytic residue.

This sequence belongs to the 4-hydroxybenzoyl-CoA thioesterase family. Highly expressed in stems and flowers and at lower levels in rosette leaves, cauline leaves and siliques.

It localises to the plastid. The protein resides in the chloroplast. Its function is as follows. Acyl-ACP thioesterase involved in the production of fatty acids and beta-keto fatty acids. Can produce fatty acids of long chain (14:1 and 16:1) and beta-keto fatty acids of medium to long chain (8:0, 10:0, 12:0, 12:1, 14:0 and 16:0) when expressed in a heterologous organism (E.coli). Possesses thioesterase activity for lauroyl-ACP (12:0-ACP) in vitro. May play a role in the generation of long fatty acids in the chloroplast. This chain is Acyl-acyl carrier protein thioesterase ATL3, chloroplastic, found in Arabidopsis thaliana (Mouse-ear cress).